Here is a 614-residue protein sequence, read N- to C-terminus: Putative Na(+)/H(+) antiporter YjbQ (614 aa).

The next 13 membrane-spanning stretches (helical) occupy residues 3–23 (HTSVASLVVVLIVAFLTPILL), 32–52 (VVVAEIIMGLIIGKSGLNLVV), 57–77 (WLQTLSMLGFIFLMFLSGLEI), 107–127 (IFVGIFILSLLLSYGFVLAGF), 130–150 (NAFLMTLIISTISLGVVVPTL), 163–183 (IILLVAVIADLATMILLAVFS), 193–213 (MWLLMILFAAGVVLYFFGRVF), 225–244 (GTIQIGTRAIFTLIIVLVAL), 248–267 (LGAENILGAFLAGVLVSLLS), 282–302 (GFLIPIFFVMVGVKLDIWTLF), 307–327 (ILIMIPLLLLALLVSKIIPVM), 338–358 (IFASGFLLTSTLSLVIAAATI), and 368–388 (NMSGALILVAVIASIFTPICF). The RCK N-terminal domain occupies 401-519 (KKTITFIGAN…EQGISIFSIL (119 aa)). Positions 533–614 (PGVMKLLTNQ…VTDLKKTLEG (82 aa)) constitute an RCK C-terminal domain.

It belongs to the monovalent cation:proton antiporter 2 (CPA2) transporter (TC 2.A.37) family.

The protein localises to the cell membrane. Binds cyclic di-AMP (c-di-AMP), which may regulate the transporter activity. Its function is as follows. Probable Na(+)/H(+) antiporter. The protein is Putative Na(+)/H(+) antiporter YjbQ of Bacillus subtilis (strain 168).